The sequence spans 431 residues: POU domain, class 2, transcription factor 3 (431 aa).

Disordered stretches follow at residues 1–39 (MVNL…RNGL), 130–180 (LLPQ…EPTD), and 248–267 (DAES…YPTL). The POU-specific domain maps to 176 to 250 (DEPTDLEELE…LLEKWLNDAE (75 aa)). Residues 251-267 (SSPSDPSASTPSSYPTL) are compositionally biased toward low complexity. The segment at residues 274 to 333 (KRKKRTSIETNIRLTLEKRFQDNPKPSSEEISMIAEQLSMEKEVVRVWFCNRRQKEKRIN) is a DNA-binding region (homeobox). Composition is skewed to low complexity over residues 352 to 364 (PSGS…VPPV), 374 to 390 (SSCS…PGSG), and 398 to 419 (ASQN…NSSG). The interval 352-419 (PSGSLGPLSV…SSSSSFNSSG (68 aa)) is disordered.

The protein belongs to the POU transcription factor family. Class-2 subfamily. Interacts (via the POU domain) with POU2AF1 and POU2AF2 in a DNA-dependent manner; this interaction recruits POU2AF2 to chromatin and increases POU2F3 transactivation activity. In terms of tissue distribution, skin, thymus, stomach and testis.

Its subcellular location is the nucleus. Transcription factor that binds to the octamer motif (5'-ATTTGCAT-3'). Regulates cell type-specific differentiation pathways. Involved in the regulation of keratinocytes differentiation. The POU2F3-POU2AF2/POU2AF3 complex drives the expression of tuft-cell-specific genes, a rare chemosensory cells that coordinate immune and neural functions within mucosal epithelial tissues. The sequence is that of POU domain, class 2, transcription factor 3 (Pou2f3) from Mus musculus (Mouse).